A 205-amino-acid polypeptide reads, in one-letter code: Peptidyl-tRNA hydrolase (205 aa).

Tyr18 contacts tRNA. The active-site Proton acceptor is the His23. TRNA contacts are provided by Tyr69, Asn71, and Asn117.

The protein belongs to the PTH family. In terms of assembly, monomer.

It is found in the cytoplasm. It carries out the reaction an N-acyl-L-alpha-aminoacyl-tRNA + H2O = an N-acyl-L-amino acid + a tRNA + H(+). Functionally, hydrolyzes ribosome-free peptidyl-tRNAs (with 1 or more amino acids incorporated), which drop off the ribosome during protein synthesis, or as a result of ribosome stalling. In terms of biological role, catalyzes the release of premature peptidyl moieties from peptidyl-tRNA molecules trapped in stalled 50S ribosomal subunits, and thus maintains levels of free tRNAs and 50S ribosomes. In Thermosynechococcus vestitus (strain NIES-2133 / IAM M-273 / BP-1), this protein is Peptidyl-tRNA hydrolase.